The sequence spans 86 residues: Putative sodium channel toxin Ts17 (86 aa).

The signal sequence occupies residues 1–19 (MNYFIFLVVACLLTAGTEG). Positions 21 to 82 (KDGYPVEGDN…EPTKTSGRCK (62 aa)) constitute an LCN-type CS-alpha/beta domain. 4 cysteine pairs are disulfide-bonded: Cys-31–Cys-81, Cys-35–Cys-57, Cys-43–Cys-64, and Cys-47–Cys-66. Pro-83 carries the post-translational modification Proline amide.

The protein belongs to the long (4 C-C) scorpion toxin superfamily. Sodium channel inhibitor family. Alpha subfamily. Expressed by the venom gland.

The protein resides in the secreted. In terms of biological role, alpha toxins bind voltage-independently at site-3 of sodium channels (Nav) and inhibit the inactivation of the activated channels, thereby blocking neuronal transmission. The polypeptide is Putative sodium channel toxin Ts17 (Tityus serrulatus (Brazilian scorpion)).